The primary structure comprises 240 residues: CRISPR-associated protein Cas5 3 (240 aa).

Belongs to the CRISPR-associated protein Cas5 family. Subtype I-A/Apern subfamily. In terms of assembly, part of the aCascade ribonucleoprotein complex.

Functionally, CRISPR (clustered regularly interspaced short palindromic repeat) is an adaptive immune system that provides protection against mobile genetic elements (viruses, transposable elements and conjugative plasmids). CRISPR clusters contain spacers, sequences complementary to antecedent mobile elements, and target invading nucleic acids. CRISPR clusters are transcribed and processed into CRISPR RNA (crRNA). The protein is CRISPR-associated protein Cas5 3 (cas5c) of Saccharolobus solfataricus (strain ATCC 35092 / DSM 1617 / JCM 11322 / P2) (Sulfolobus solfataricus).